The primary structure comprises 151 residues: MRRRARELAMRALFAHTVGGMGLEEAFQHALEEMGGEEEGYAEPLDQEGVAFARRLLSGYKAHQEEVDRVLEETVEGWDFRQMAKTDLAVLRLAVYEMLYEPTPFEPLIEVAVKIANRYGGEHSGSFVNGVLARVYRRVAAGELKTVAKEA.

The protein belongs to the NusB family.

Its function is as follows. Involved in transcription antitermination. Required for transcription of ribosomal RNA (rRNA) genes. Binds specifically to the boxA antiterminator sequence of the ribosomal RNA (rrn) operons. This chain is Transcription antitermination protein NusB, found in Thermus thermophilus (strain ATCC BAA-163 / DSM 7039 / HB27).